Here is a 158-residue protein sequence, read N- to C-terminus: Cyclic pyranopterin monophosphate synthase (158 aa).

Substrate is bound by residues 75–77 (LCH) and 113–114 (ME). Residue aspartate 128 is part of the active site.

This sequence belongs to the MoaC family. In terms of assembly, homohexamer; trimer of dimers.

The catalysed reaction is (8S)-3',8-cyclo-7,8-dihydroguanosine 5'-triphosphate = cyclic pyranopterin phosphate + diphosphate. Its pathway is cofactor biosynthesis; molybdopterin biosynthesis. Functionally, catalyzes the conversion of (8S)-3',8-cyclo-7,8-dihydroguanosine 5'-triphosphate to cyclic pyranopterin monophosphate (cPMP). The chain is Cyclic pyranopterin monophosphate synthase from Roseiflexus castenholzii (strain DSM 13941 / HLO8).